Consider the following 65-residue polypeptide: Large ribosomal subunit protein bL35 (65 aa).

The disordered stretch occupies residues 1–21 (MPKMKTKSGAAKRFTVRAGGT).

This sequence belongs to the bacterial ribosomal protein bL35 family.

This Nitrosospira multiformis (strain ATCC 25196 / NCIMB 11849 / C 71) protein is Large ribosomal subunit protein bL35.